The sequence spans 304 residues: Acetylxylan esterase A (304 aa).

A signal peptide spans 1–24 (MLLSTHLLFVITTLVTSLLHPIDG). Serine 148 functions as the Charge relay system in the catalytic mechanism. Asparagine 190 is a glycosylation site (N-linked (GlcNAc...) asparagine).

This sequence belongs to the carbohydrate esterase 1 (CE1) family. AxeA subfamily. Monomer.

It localises to the secreted. It catalyses the reaction Deacetylation of xylans and xylo-oligosaccharides.. It functions in the pathway glycan degradation; xylan degradation. Its activity is regulated as follows. Inactivated by di-isopropylfluorophosphate and phenylmethylsulfonylfluorid (PMSF), a specific inhibitor of serine esterases. Functionally, acetylxylan esterase involved in the hydrolysis of xylan, a major structural heterogeneous polysaccharide found in plant biomass representing the second most abundant polysaccharide in the biosphere, after cellulose. Degrades acetylated xylans by cleaving acetyl side groups from the hetero-xylan backbone. The chain is Acetylxylan esterase A (axeA) from Aspergillus awamori (Black koji mold).